The chain runs to 163 residues: MLRKISLLLLPVFVAINLVHSSPEIMKNLSNNFGKAMDQCKDELSLPDSVVADLYNFWKDDYVMTDRLAGCAINCLATKLDVVDPDGNLHHGNAKDFAMKHGADETMAQQLVDIIHGCEKSAPPNDDKCMKTIDVAMCFKKEIHKLNWVPNMDLVIGEVLAEV.

The signal sequence occupies residues 1–21 (MLRKISLLLLPVFVAINLVHS). Intrachain disulfides connect C40–C75, C71–C129, and C118–C138.

It belongs to the PBP/GOBP family. Homodimer. In terms of tissue distribution, antenna.

Its function is as follows. This major soluble protein in olfactory sensilla of male moths might serve to solubilize the extremely hydrophobic pheromone molecules and to transport pheromone through the aqueous lymph to receptors located on olfactory cilia. The chain is Pheromone-binding protein from Antheraea polyphemus (Polyphemus moth).